The following is a 203-amino-acid chain: Dephospho-CoA kinase (203 aa).

The DPCK domain occupies 4–203 (VIGITGGIAT…EEGYIQSESE (200 aa)). 12 to 17 (ATGKST) is a binding site for ATP.

Belongs to the CoaE family.

Its subcellular location is the cytoplasm. The enzyme catalyses 3'-dephospho-CoA + ATP = ADP + CoA + H(+). The protein operates within cofactor biosynthesis; coenzyme A biosynthesis; CoA from (R)-pantothenate: step 5/5. Catalyzes the phosphorylation of the 3'-hydroxyl group of dephosphocoenzyme A to form coenzyme A. This chain is Dephospho-CoA kinase, found in Staphylococcus epidermidis (strain ATCC 35984 / DSM 28319 / BCRC 17069 / CCUG 31568 / BM 3577 / RP62A).